Reading from the N-terminus, the 162-residue chain is Interleukin-15 (162 aa).

Residues 1–29 form the signal peptide; the sequence is MRISKPHLRSVSIQCYLCLLLNSHFLTEA. Residues 30 to 48 constitute a propeptide that is removed on maturation; the sequence is GIHVFILGCFSAGLPKTEA. Disulfide bonds link Cys83–Cys133 and Cys90–Cys136. Residue Asn127 is glycosylated (N-linked (GlcNAc...) asparagine).

This sequence belongs to the IL-15/IL-21 family.

The protein resides in the secreted. Cytokine that plays a major role in the development of inflammatory and protective immune responses to microbial invaders and parasites by modulating immune cells of both the innate and adaptive immune systems. Stimulates the proliferation of natural killer cells, T-cells and B-cells and promotes the secretion of several cytokines. In monocytes, induces the production of IL8 and monocyte chemotactic protein 1/CCL2, two chemokines that attract neutrophils and monocytes respectively to sites of infection. Unlike most cytokines, which are secreted in soluble form, IL15 is expressed in association with its high affinity IL15RA on the surface of IL15-producing cells and delivers signals to target cells that express IL2RB and IL2RG receptor subunits. Binding to its receptor triggers the phosphorylation of JAK1 and JAK3 and the recruitment and subsequent phosphorylation of signal transducer and activator of transcription-3/STAT3 and STAT5. In mast cells, induces the rapid tyrosine phosphorylation of STAT6 and thereby controls mast cell survival and release of cytokines such as IL4. The chain is Interleukin-15 (IL15) from Macaca mulatta (Rhesus macaque).